Here is a 91-residue protein sequence, read N- to C-terminus: Non-specific lipid-transfer protein 1 (91 aa).

Intrachain disulfides connect Cys-4/Cys-51, Cys-14/Cys-28, Cys-29/Cys-74, and Cys-49/Cys-88.

In terms of tissue distribution, expressed in seeds (at protein level).

Its function is as follows. Plant non-specific lipid-transfer proteins transfer phospholipids as well as galactolipids across membranes. May play a role in wax or cutin deposition in the cell walls of expanding epidermal cells and certain secretory tissues. Binds to both saturated and unsaturated lipids, with the highest binding efficiency for linoleic acid, followed by linolenic acid. This chain is Non-specific lipid-transfer protein 1, found in Foeniculum vulgare (Fennel).